Consider the following 1101-residue polypeptide: Rho GTPase-activating protein 30 (1101 aa).

A Rho-GAP domain is found at 20–215; that stretch reads CDLQEHLQHS…FILTHVDQLF (196 aa). Disordered regions lie at residues 224-243, 300-400, and 451-529; these read EVESGWRSLPGTRASGSPED, HETK…RAGG, and ALQH…AEDG. Positions 308–318 are enriched in basic and acidic residues; it reads RGAEDREDKSN. The segment covering 360-376 has biased composition (acidic residues); it reads LENDSIEAAEGEQEPEA. Pro residues predominate over residues 459-472; that stretch reads ASGPGPGPGLGPGP. Over residues 508 to 520 the composition is skewed to low complexity; sequence DSFSFLEDSSSSE. Ser576 bears the Phosphoserine mark. Disordered regions lie at residues 621 to 906 and 965 to 991; these read GPKP…QPSP and CPRPGRLDGTPGERAWGSRASRSSWRN. 4 stretches are compositionally biased toward basic and acidic residues: residues 658 to 694, 701 to 735, 759 to 770, and 779 to 822; these read GEDKQAEPGGRLDIREEAEGSPETKVEAGKASEDRGE, TKVRLREGSREETEAKEEKSKGQKKADSMEAKGVE, EEAQVEAGRDLE, and AEEK…DSRS. Over residues 976–991 the composition is skewed to low complexity; the sequence is GERAWGSRASRSSWRN. Phosphoserine is present on Ser996. Positions 1050–1101 are disordered; the sequence is LELPSEGAEGSGSRSRLSLPPREPQVPDPLLSSQRRSYAFETQANPGKGEGL. Positions 1053-1069 are enriched in low complexity; sequence PSEGAEGSGSRSRLSLP. The segment covering 1080 to 1094 has biased composition (polar residues); it reads LSSQRRSYAFETQAN.

Interacts with RHOU in a GTP-independent manner.

It is found in the cytoplasmic vesicle. Its function is as follows. GTPase-activating protein (GAP) for RAC1 and RHOA, but not for CDC42. This Homo sapiens (Human) protein is Rho GTPase-activating protein 30 (ARHGAP30).